Reading from the N-terminus, the 848-residue chain is Paramyosin (848 aa).

The nonhelical region stretch occupies residues 1–9 (AFGSMSVAD). The stretch at 10 to 833 (LGSLTRLEDK…HLIRAKHRSS (824 aa)) forms a coiled coil. The segment at 834–848 (VVTGKNASASKIYVL) is nonhelical region.

This sequence belongs to the paramyosin family. Homodimer.

It localises to the cytoplasm. It is found in the myofibril. Its function is as follows. Paramyosin is a major structural component of many thick filaments isolated from invertebrate muscles. This Dirofilaria immitis (Canine heartworm) protein is Paramyosin.